We begin with the raw amino-acid sequence, 141 residues long: MSVERTLSIIKPDAVAKNVIGQIIARFENAGLKVIAARLQQLSRADAERFYAVHKERPFFKDLVDFMVSGPVFVQVLEGEGAIQKNRDLMGATDPKKAAPGTIRADFADSIDANAVHGSDAAETAAVEVAFFFPEINIHSR.

ATP contacts are provided by lysine 11, phenylalanine 59, arginine 87, threonine 93, arginine 104, and asparagine 114. Histidine 117 functions as the Pros-phosphohistidine intermediate in the catalytic mechanism.

Belongs to the NDK family. In terms of assembly, homotetramer. The cofactor is Mg(2+).

The protein localises to the cytoplasm. The catalysed reaction is a 2'-deoxyribonucleoside 5'-diphosphate + ATP = a 2'-deoxyribonucleoside 5'-triphosphate + ADP. The enzyme catalyses a ribonucleoside 5'-diphosphate + ATP = a ribonucleoside 5'-triphosphate + ADP. Major role in the synthesis of nucleoside triphosphates other than ATP. The ATP gamma phosphate is transferred to the NDP beta phosphate via a ping-pong mechanism, using a phosphorylated active-site intermediate. This chain is Nucleoside diphosphate kinase, found in Bordetella petrii (strain ATCC BAA-461 / DSM 12804 / CCUG 43448).